A 154-amino-acid polypeptide reads, in one-letter code: Crossover junction endodeoxyribonuclease RuvC (154 aa).

Active-site residues include D7, E67, and D139. Mg(2+) is bound by residues D7, E67, and D139.

This sequence belongs to the RuvC family. In terms of assembly, homodimer which binds Holliday junction (HJ) DNA. The HJ becomes 2-fold symmetrical on binding to RuvC with unstacked arms; it has a different conformation from HJ DNA in complex with RuvA. In the full resolvosome a probable DNA-RuvA(4)-RuvB(12)-RuvC(2) complex forms which resolves the HJ. Requires Mg(2+) as cofactor.

Its subcellular location is the cytoplasm. The enzyme catalyses Endonucleolytic cleavage at a junction such as a reciprocal single-stranded crossover between two homologous DNA duplexes (Holliday junction).. In terms of biological role, the RuvA-RuvB-RuvC complex processes Holliday junction (HJ) DNA during genetic recombination and DNA repair. Endonuclease that resolves HJ intermediates. Cleaves cruciform DNA by making single-stranded nicks across the HJ at symmetrical positions within the homologous arms, yielding a 5'-phosphate and a 3'-hydroxyl group; requires a central core of homology in the junction. The consensus cleavage sequence is 5'-(A/T)TT(C/G)-3'. Cleavage occurs on the 3'-side of the TT dinucleotide at the point of strand exchange. HJ branch migration catalyzed by RuvA-RuvB allows RuvC to scan DNA until it finds its consensus sequence, where it cleaves and resolves the cruciform DNA. The protein is Crossover junction endodeoxyribonuclease RuvC of Prochlorococcus marinus (strain MIT 9313).